The following is a 1445-amino-acid chain: MAPGRKRGANKAMAIGEMRLGDLVLAKVKGFPAWPAKIGQPEDWNQAPDPKKHFVQFYGTGEIGFVTPPDIQPFTSETKKKLSARCQGKTVKYFSQAVEEISAAFEESQKQKSDIVGNEALLNAVEPSVTKPKYLNQASSDGKSDKFSSRADPCLGKLVENNGAEINPDVGEQDSSISNNRNTSPSSEPVEHGSPDPILKVAVDDKIDNVTCTDHSDGTGNNLVNDQRIIRKTTDDSNKRCKDEVRAKRVPDSRAATDNHILGPNQKLKGSIKGQDHGSKKGQDHGCRKESSDSKVVTDLNIASSKKPKELLKEKKKRFENELGKSASGADESKRAAKRPRSEDAKDQKQCKSKRLVPVGEGKAEISDSTGVVSIFKREIVLGISALGGKNQFDKDMVAYTKRRKQTVEHTSVSSFPGSLVKEGANHPEQKISSSSDSDIKVQAAQLPKRRRAVCIYDDDDDDEDPKTPVHGGLSNIPIASTDAPKSANASHNTSIKAKLLAGSTDSVKTGKVPLYKHNKDASLALPDSVEGYNSRMGKPFKALLQKNIKPILRSPKNSYQLVSFKKQVTGQNKTAKVAGAGMPDSVEGPSNSSYMGKPVIKLPPQNVKQTLRSPKKSPQLFSTKELVAVQNKIAKVSGAGIPKKYHGDSSKDVVAGSDRVSSSHSQTANQRSKPAFGEKPTSTPKVATRLDVEVSRDTFVNLSADVIDVNQENGNAPLFSFGMSDSSSSCMKDLIAAAQAKRKQAHSQFSPFVNLDHNSLNIDSMQTSKSPFMVQNVSSPAADATLIVAQEHQEVLTPSNHGRQSSSSNQAGTEENEERRFSSGHRSVGGSLSGATEAAISRDTFEGMIETLSRTKESIRRATRVAIDCAKYGIANEVVELLIRKLEIEPHFPRKVDLFFLLDSIIQSSHSQKGRARSLYIPTVQAALPRLLGAAAPPGTGARENRHQCRKVLRLWLKRKIFPDFLLRRYIGDLGASGDDKTVGFSLRRPSRSERAVDDPLRDMEGMLVDEYGSNANFQLPGYLASLTFGDDEEEDLPSTSQEVKNTHMEVKITHMEEPVLALGKLEAHDSSSDKPHCVVDVNGGLEMEDASCQLKDDVCGIEAKEDSPATTCATELPSFPAGSPPLPHESPPSPPPQPPSSPPPPSSPPQLAPAPPPSDHCLPPPTAPLAPAQSIALPPSSITRPSMPSHPSLPLQPGFAPPAYPLLQHEYQISMQRDHSSIATSNQIAPVPVNAAHGRHADGGVKSEYLMPQSSSFAPVGMCSYGEPLPFISSKQLEYGNSDVLFKQEASSQNQQLRPINTSFLQRPMIRNLAPAPSSHFPLPCRIVQSEPQRSSFPHPYHFPSQPVDGRQHMNEEWRMPPNGCSADPQYGAWIGVRNPFPGSRTVTDGVFQPPPERPPSGTVRYQLAANNLQGGSTISGNIASQMLLSRPDVPSAAQYRPS.

Residues 20 to 77 (LGDLVLAKVKGFPAWPAKIGQPEDWNQAPDPKKHFVQFYGTGEIGFVTPPDIQPFTSE) enclose the PWWP domain. 7 disordered regions span residues 133–197 (KYLN…SPDP), 211–302 (TCTD…DLNI), 319–356 (FENE…SKRL), 409–439 (EHTS…SDSD), 460–491 (DDDD…ANAS), 641–685 (GIPK…TSTP), and 797–835 (LTPS…SLSG). Polar residues-rich tracts occupy residues 173 to 187 (QDSS…SPSS) and 211 to 225 (TCTD…NLVN). 3 stretches are compositionally biased toward basic and acidic residues: residues 228-257 (RIIR…RAAT), 274-293 (GQDH…ESSD), and 331-350 (DESK…DQKQ). 2 stretches are compositionally biased toward polar residues: residues 660 to 673 (RVSS…NQRS) and 797 to 814 (LTPS…QAGT). The region spanning 838–979 (EAAISRDTFE…RYIGDLGASG (142 aa)) is the CID domain. The disordered stretch occupies residues 1110–1203 (PATTCATELP…SLPLQPGFAP (94 aa)). Positions 1124-1170 (GSPPLPHESPPSPPPQPPSSPPPPSSPPQLAPAPPPSDHCLPPPTAP) are enriched in pro residues.

In terms of tissue distribution, expressed throughout young primordia, and vegetative and reproductive apices.

It is found in the nucleus. Probable transcription factor that acts with partial redundancy with HULK2 and HULK3. Plays diverse and essential roles in the control of plant development, physiology and flowering time. In Arabidopsis thaliana (Mouse-ear cress), this protein is Protein HUA2-LIKE 1.